A 204-amino-acid chain; its full sequence is MTIPIVIEQSGRGERAFDIYSRLLRERIVFLGQQVDSNLANLIVAQLLFLDAEDPEKDIYLYINSPGGSVTAGMGIFDTMKHIRPDVCTICTGLAASMGAFLLSAGAKGKRMSLPHSRIMIHQPLGGAQGQATDIEIQAREILYHKRRLNDYLAEHTGQPIERIAEDTERDFFMSPDEAKDYGLIDQVIDRHAAGSRPVAMVGQ.

Ser97 acts as the Nucleophile in catalysis. The active site involves His122.

It belongs to the peptidase S14 family. In terms of assembly, fourteen ClpP subunits assemble into 2 heptameric rings which stack back to back to give a disk-like structure with a central cavity, resembling the structure of eukaryotic proteasomes.

It localises to the cytoplasm. It catalyses the reaction Hydrolysis of proteins to small peptides in the presence of ATP and magnesium. alpha-casein is the usual test substrate. In the absence of ATP, only oligopeptides shorter than five residues are hydrolyzed (such as succinyl-Leu-Tyr-|-NHMec, and Leu-Tyr-Leu-|-Tyr-Trp, in which cleavage of the -Tyr-|-Leu- and -Tyr-|-Trp bonds also occurs).. In terms of biological role, cleaves peptides in various proteins in a process that requires ATP hydrolysis. Has a chymotrypsin-like activity. Plays a major role in the degradation of misfolded proteins. This chain is ATP-dependent Clp protease proteolytic subunit 1, found in Nostoc sp. (strain PCC 7120 / SAG 25.82 / UTEX 2576).